Here is a 405-residue protein sequence, read N- to C-terminus: Eukaryotic translation initiation factor 5 (405 aa).

Residue 27–34 (GRGNGIKT) participates in GTP binding. Residues 143–202 (NPPDSVSGSKKKKKAATASANVRGGGLSISDIAQGKSQNAPSDGTGSSTPQHHDEDEDEL) are disordered. 2 positions are modified to phosphoserine: serine 170 and serine 172. Positions 177–192 (GKSQNAPSDGTGSSTP) are enriched in polar residues. The residue at position 191 (threonine 191) is a Phosphothreonine. Residue serine 228 is modified to Phosphoserine. The W2 domain occupies 241–402 (VNSELTQLDE…ETAESDDDEE (162 aa)). Residue threonine 317 is modified to Phosphothreonine. Phosphoserine is present on serine 397.

It belongs to the eIF-2-beta/eIF-5 family. In terms of assembly, monomer. The factors eIF-1, eIF-2, eIF-3, TIF5/eIF-5 and methionyl-tRNAi form a multifactor complex (MFC) that may bind to the 40S ribosome. TIF32, NIP1 and TIF5/eIF-5 comprise a minimal 40S-ribosome-binding unit. Interacts with NIP1. Interacts with SUI3.

Functionally, catalyzes the hydrolysis of GTP bound to the 40S ribosomal initiation complex (40S.mRNA.Met-tRNA[F].eIF-2.GTP) with the subsequent joining of a 60S ribosomal subunit resulting in the release of eIF-2 and the guanine nucleotide. The subsequent joining of a 60S ribosomal subunit results in the formation of a functional 80S initiation complex (80S.mRNA.Met-tRNA[F]). eIF-5 is essential for cell viability. This Saccharomyces cerevisiae (strain ATCC 204508 / S288c) (Baker's yeast) protein is Eukaryotic translation initiation factor 5 (TIF5).